A 177-amino-acid polypeptide reads, in one-letter code: Large ribosomal subunit protein uL6 (177 aa).

The protein belongs to the universal ribosomal protein uL6 family. In terms of assembly, part of the 50S ribosomal subunit.

This protein binds to the 23S rRNA, and is important in its secondary structure. It is located near the subunit interface in the base of the L7/L12 stalk, and near the tRNA binding site of the peptidyltransferase center. This Verminephrobacter eiseniae (strain EF01-2) protein is Large ribosomal subunit protein uL6.